The primary structure comprises 106 residues: Urease subunit beta (106 aa).

The protein belongs to the urease beta subunit family. Heterotrimer of UreA (gamma), UreB (beta) and UreC (alpha) subunits. Three heterotrimers associate to form the active enzyme.

It is found in the cytoplasm. The catalysed reaction is urea + 2 H2O + H(+) = hydrogencarbonate + 2 NH4(+). It participates in nitrogen metabolism; urea degradation; CO(2) and NH(3) from urea (urease route): step 1/1. The protein is Urease subunit beta of Prochlorococcus marinus subsp. pastoris (strain CCMP1986 / NIES-2087 / MED4).